We begin with the raw amino-acid sequence, 228 residues long: Ribose-5-phosphate isomerase A (228 aa).

Residues 32 to 35, 85 to 88, and 98 to 101 each bind substrate; these read TGST, DGAD, and KGGG. The active-site Proton acceptor is Glu-107. Position 125 (Lys-125) interacts with substrate.

This sequence belongs to the ribose 5-phosphate isomerase family. In terms of assembly, homodimer.

It carries out the reaction aldehydo-D-ribose 5-phosphate = D-ribulose 5-phosphate. The protein operates within carbohydrate degradation; pentose phosphate pathway; D-ribose 5-phosphate from D-ribulose 5-phosphate (non-oxidative stage): step 1/1. In terms of biological role, catalyzes the reversible conversion of ribose-5-phosphate to ribulose 5-phosphate. The protein is Ribose-5-phosphate isomerase A of Cupriavidus necator (strain ATCC 17699 / DSM 428 / KCTC 22496 / NCIMB 10442 / H16 / Stanier 337) (Ralstonia eutropha).